A 291-amino-acid chain; its full sequence is Beta-lactamase CTX-M-97 (291 aa).

A signal peptide spans Met1–Ala28. The Acyl-ester intermediate role is filled by Ser73. Residue Lys237–Gly239 participates in substrate binding.

It belongs to the class-A beta-lactamase family.

The enzyme catalyses a beta-lactam + H2O = a substituted beta-amino acid. Its function is as follows. Is probably capable of hydrolyzing cephalosporins such as ceftriaxone and ceftazidime, thus conferring resistance to these antibiotics. This chain is Beta-lactamase CTX-M-97 (bla), found in Escherichia coli.